A 639-amino-acid polypeptide reads, in one-letter code: UPF0313 protein CLJ_B0249 (639 aa).

A Radical SAM core domain is found at A295–S566. 3 residues coordinate [4Fe-4S] cluster: C309, C313, and C316. A disordered region spans residues Y597–K639. 2 stretches are compositionally biased toward basic residues: residues P600–A610 and K626–K639.

It belongs to the UPF0313 family. The cofactor is [4Fe-4S] cluster.

The protein is UPF0313 protein CLJ_B0249 of Clostridium botulinum (strain 657 / Type Ba4).